Reading from the N-terminus, the 345-residue chain is Telomere-binding protein cav (345 aa).

Residues 115–337 (RRKMVQPYPE…TITFQNTESE (223 aa)) form a required for binding to Su(var)205 region. 2 disordered regions span residues 145–180 (RLDR…HEDQ) and 200–231 (PPGV…INRP). 2 consecutive short sequence motifs (su(var)205-binding Pro-containing repeat) follow at residues 231–237 (PETEINE) and 298–304 (PETEMNE).

Component of the HipHop-HOAP telomere capping complex, composed of at least HipHop and cav/HOAP, and may include Su(var)205/HP1; HipHop and cav/HOAP, but not Su(var)205, are interdependent for their protein stability. Interacts with HipHop (via N-terminus). Interacts (via C-terminus) with Su(var)205/HP1 dimer (via hinge and chromoshadow domain) and Orc1; possibly interacts with other components of the origin recognition complex (ORC). Each molecule of cav/HOAP interacts with 2 molecules of Su(var)205/HP1. The HipHop-HOAP complex recruits the MTV complex, consisting of moi/modigliani, tea and ver/verrocchio, to telomeres, forming the terminin telomere-capping complex. Interacts with moi/modigliani; the interaction is direct. Interacts with ver/verrochio; the interaction is direct. Interacts with HP6, which is also part of the terminin complex. Interacts (via N-terminus) with peo/pendolino (via N-terminus); the interaction is direct.

It is found in the nucleus. It localises to the chromosome. The protein resides in the telomere. In terms of biological role, part of the HipHop-HOAP complex that recruits the MTV complex to form the terminin telomere-capping complex, which binds to chromosome ends in a sequence-independent manner and prevents telomere fusion. Telomere capping is independent of the origin recognition complex (ORC). The protein is Telomere-binding protein cav of Drosophila melanogaster (Fruit fly).